The primary structure comprises 144 residues: TSC22 domain family protein 1 (144 aa).

The tract at residues leucine 77–leucine 98 is leucine-zipper. Residues glutamine 109 to alanine 144 form a disordered region. The segment covering glutamine 115 to alanine 144 has biased composition (low complexity).

This sequence belongs to the TSC-22/Dip/Bun family. As to quaternary structure, forms homodimers. Forms a heterodimer with TSC22D4/THG1. Interacts with histone H1-2. Interacts with GNL3.

It localises to the cytoplasm. The protein localises to the nucleus. Transcriptional repressor. Plays a role in the repression of hematopoietic precursor cell growth. Promotes IL2 deprivation-induced apoptosis in T-lymphocytes, via repression of TSC22D3/GILZ transcription and activation of the caspase cascade. Positively regulates cell death in response to TGFB3 during mammary gland involution. This is TSC22 domain family protein 1 from Bos taurus (Bovine).